The primary structure comprises 81 residues: Gamma-conotoxin-like TxMEKL-0511 (81 aa).

The N-terminal stretch at 1–19 is a signal peptide; it reads MEKLTILLLVAAVLLSIQA. A propeptide spanning residues 20 to 45 is cleaved from the precursor; that stretch reads LNQEKHQRAKINLLSKRKPPAERWWR. 3 cysteine pairs are disulfide-bonded: Cys49–Cys63, Cys56–Cys67, and Cys62–Cys72.

It belongs to the conotoxin O2 superfamily. In terms of tissue distribution, expressed by the venom duct.

The protein localises to the secreted. Gamma-conotoxins may act on voltage-gated non-specific cation pacemaker channels (HCN). This Conus textile (Cloth-of-gold cone) protein is Gamma-conotoxin-like TxMEKL-0511.